The primary structure comprises 135 residues: Large ribosomal subunit protein uL16c (135 aa).

This sequence belongs to the universal ribosomal protein uL16 family. As to quaternary structure, part of the 50S ribosomal subunit.

The protein localises to the plastid. It localises to the chloroplast. This is Large ribosomal subunit protein uL16c from Populus alba (White poplar).